The primary structure comprises 215 residues: Polysialic acid O-acetyltransferase (215 aa).

Acetyl-CoA contacts are provided by residues 119 to 121, Arg-148, Lys-154, Ser-166, 171 to 172, and Lys-190; these read DMH and YK.

It belongs to the transferase hexapeptide repeat family. As to quaternary structure, homotrimer.

It catalyses the reaction [(2-&gt;6)-alpha-D-glucosyl-(1-&gt;4)-N-acetyl-alpha-D-neuraminosyl](n) + n acetyl-CoA = [(2-&gt;6)-alpha-D-glucosyl-(1-&gt;4)-N,7-O-diacetyl-alpha-D-neuraminosyl](n) + n CoA. The enzyme catalyses [(2-&gt;6)-alpha-D-glucosyl-(1-&gt;4)-N-acetyl-alpha-D-neuraminosyl](n) + n acetyl-CoA = [(2-&gt;6)-alpha-D-glucosyl-(1-&gt;4)-N,O(9)-diacetyl-alpha-D-neuraminosyl](n) + n CoA. In terms of biological role, catalyzes the O-acetylation of capsular polymeric sialic acid consisting of polymers of (2-&gt;6)-alpha-D-glucosyl-(1-&gt;4)-N-acetyl-alpha-D-neuraminosyl residues. Shows high substrate specificity toward polymers of sialic acid that contains a large number of residues. The protein is Polysialic acid O-acetyltransferase of Neisseria meningitidis.